The primary structure comprises 179 residues: Ubiquitin-conjugating enzyme E2 2 (179 aa).

The interval 1-28 (MSTPARRRLMRDFKRMQQDPPSGVSASP) is disordered. One can recognise a UBC core domain in the interval 4 to 150 (PARRRLMRDF…VRETVENSWN (147 aa)). Cys-88 (glycyl thioester intermediate) is an active-site residue. The disordered stretch occupies residues 145–179 (VENSWNDDDDEEEEEEDEDEAEDEDDDDDDNIDED). Over residues 149–179 (WNDDDDEEEEEEDEDEAEDEDDDDDDNIDED) the composition is skewed to acidic residues. The segment at 151-179 (DDDDEEEEEEDEDEAEDEDDDDDDNIDED) is acidic tail.

Belongs to the ubiquitin-conjugating enzyme family.

The protein resides in the cytoplasm. It is found in the nucleus. The catalysed reaction is S-ubiquitinyl-[E1 ubiquitin-activating enzyme]-L-cysteine + [E2 ubiquitin-conjugating enzyme]-L-cysteine = [E1 ubiquitin-activating enzyme]-L-cysteine + S-ubiquitinyl-[E2 ubiquitin-conjugating enzyme]-L-cysteine.. It participates in protein modification; protein ubiquitination. Its function is as follows. Catalyzes the covalent attachment of ubiquitin to other proteins. Plays a role in transcription regulation by catalyzing the monoubiquitination of histone H2B to form H2BK123ub1. H2BK123ub1 gives a specific tag for epigenetic transcriptional activation and is also a prerequisite for H3K4me and H3K79me formation. Also involved in postreplication repair of UV-damaged DNA, in N-end rule-dependent protein degradation and in sporulation. This Candida albicans (strain SC5314 / ATCC MYA-2876) (Yeast) protein is Ubiquitin-conjugating enzyme E2 2 (UBC2).